We begin with the raw amino-acid sequence, 288 residues long: Bifunctional protein FolD (288 aa).

Residues 166-168 and Ile-232 contribute to the NADP(+) site; that span reads GAS.

This sequence belongs to the tetrahydrofolate dehydrogenase/cyclohydrolase family. In terms of assembly, homodimer.

It catalyses the reaction (6R)-5,10-methylene-5,6,7,8-tetrahydrofolate + NADP(+) = (6R)-5,10-methenyltetrahydrofolate + NADPH. The enzyme catalyses (6R)-5,10-methenyltetrahydrofolate + H2O = (6R)-10-formyltetrahydrofolate + H(+). Its pathway is one-carbon metabolism; tetrahydrofolate interconversion. Functionally, catalyzes the oxidation of 5,10-methylenetetrahydrofolate to 5,10-methenyltetrahydrofolate and then the hydrolysis of 5,10-methenyltetrahydrofolate to 10-formyltetrahydrofolate. The sequence is that of Bifunctional protein FolD from Escherichia coli O139:H28 (strain E24377A / ETEC).